We begin with the raw amino-acid sequence, 274 residues long: Large ribosomal subunit protein uL2cz/uL2cy (274 aa).

Disordered stretches follow at residues 1–25 (MAIHLYKTSTPSTRNGAVDSQVKSN) and 224–274 (NPVD…RRSK).

This sequence belongs to the universal ribosomal protein uL2 family. Part of the 50S ribosomal subunit.

The protein resides in the plastid. The protein localises to the chloroplast. The sequence is that of Large ribosomal subunit protein uL2cz/uL2cy (rpl2-A) from Aethionema cordifolium (Lebanon stonecress).